We begin with the raw amino-acid sequence, 420 residues long: L-rhamnose isomerase (420 aa).

His264, Asp296, and Asp298 together coordinate Mn(2+).

It belongs to the rhamnose isomerase family. The cofactor is Mn(2+).

The protein localises to the cytoplasm. The catalysed reaction is L-rhamnopyranose = L-rhamnulose. Its pathway is carbohydrate degradation; L-rhamnose degradation; glycerone phosphate from L-rhamnose: step 1/3. Its function is as follows. Catalyzes the interconversion of L-rhamnose and L-rhamnulose. This is L-rhamnose isomerase from Listeria monocytogenes serotype 4b (strain F2365).